A 339-amino-acid chain; its full sequence is Dihydroorotase (339 aa).

His12 and His14 together coordinate Zn(2+). Substrate-binding positions include 14–16 and Asn40; that span reads HVR. Residues Lys94, His133, His167, and Asp239 each coordinate Zn(2+). Lys94 is modified (N6-carboxylysine). His133 serves as a coordination point for substrate. Asp239 is an active-site residue. Substrate-binding residues include His243 and Ala255.

The protein belongs to the metallo-dependent hydrolases superfamily. DHOase family. Class II DHOase subfamily. As to quaternary structure, homodimer. Zn(2+) serves as cofactor.

The catalysed reaction is (S)-dihydroorotate + H2O = N-carbamoyl-L-aspartate + H(+). It participates in pyrimidine metabolism; UMP biosynthesis via de novo pathway; (S)-dihydroorotate from bicarbonate: step 3/3. In terms of biological role, catalyzes the reversible cyclization of carbamoyl aspartate to dihydroorotate. The polypeptide is Dihydroorotase (Helicobacter pylori (strain G27)).